Here is a 322-residue protein sequence, read N- to C-terminus: Cysteine protease yopT1 (322 aa).

A disordered region spans residues 42 to 69; that stretch reads LSHSNRQKKLSATIKHNQSSRSMLDRKL. Residues Cys139, His258, and Asp274 contribute to the active site.

This sequence belongs to the peptidase C58 family. As to quaternary structure, interacts with human ARHA.

It localises to the secreted. Its function is as follows. Cysteine protease, which is translocated into infected cells and plays a central role in pathogenesis by cleaving the C-terminus end of the human small GTPase RhoA/ARHA, a regulator of cytoskeleton. Once cleaved, ARHA loses its lipid modification, and is released from the cell membrane, leading to the subsequent disruption of actin cytoskeleton of the host cell. The sequence is that of Cysteine protease yopT1 (yopT1) from Yersinia enterocolitica serotype O:8 / biotype 1B (strain NCTC 13174 / 8081).